We begin with the raw amino-acid sequence, 103 residues long: Large ribosomal subunit protein bL21 (103 aa).

This sequence belongs to the bacterial ribosomal protein bL21 family. As to quaternary structure, part of the 50S ribosomal subunit. Contacts protein L20.

Its function is as follows. This protein binds to 23S rRNA in the presence of protein L20. The polypeptide is Large ribosomal subunit protein bL21 (Escherichia coli O127:H6 (strain E2348/69 / EPEC)).